Reading from the N-terminus, the 347-residue chain is NADH-quinone oxidoreductase subunit H (347 aa).

8 helical membrane-spanning segments follow: residues 14-34, 82-102, 115-135, 161-181, 198-218, 258-278, 285-305, and 321-341; these read IMIG…AYIL, AVFL…WAVI, VGIL…IMGG, IGFV…TDIV, LLDW…ISAL, AIVL…LPPL, WVPG…MFGI, and LGWK…AFVL.

The protein belongs to the complex I subunit 1 family. In terms of assembly, NDH-1 is composed of 14 different subunits. Subunits NuoA, H, J, K, L, M, N constitute the membrane sector of the complex.

The protein localises to the cell inner membrane. The enzyme catalyses a quinone + NADH + 5 H(+)(in) = a quinol + NAD(+) + 4 H(+)(out). Functionally, NDH-1 shuttles electrons from NADH, via FMN and iron-sulfur (Fe-S) centers, to quinones in the respiratory chain. The immediate electron acceptor for the enzyme in this species is believed to be ubiquinone. Couples the redox reaction to proton translocation (for every two electrons transferred, four hydrogen ions are translocated across the cytoplasmic membrane), and thus conserves the redox energy in a proton gradient. This subunit may bind ubiquinone. The protein is NADH-quinone oxidoreductase subunit H of Allorhizobium ampelinum (strain ATCC BAA-846 / DSM 112012 / S4) (Agrobacterium vitis (strain S4)).